The primary structure comprises 185 residues: Peptidyl-tRNA hydrolase (185 aa).

A tRNA-binding site is contributed by Y14. H19 acts as the Proton acceptor in catalysis. 3 residues coordinate tRNA: Y65, N67, and N113.

Belongs to the PTH family. Monomer.

It localises to the cytoplasm. The enzyme catalyses an N-acyl-L-alpha-aminoacyl-tRNA + H2O = an N-acyl-L-amino acid + a tRNA + H(+). In terms of biological role, hydrolyzes ribosome-free peptidyl-tRNAs (with 1 or more amino acids incorporated), which drop off the ribosome during protein synthesis, or as a result of ribosome stalling. Catalyzes the release of premature peptidyl moieties from peptidyl-tRNA molecules trapped in stalled 50S ribosomal subunits, and thus maintains levels of free tRNAs and 50S ribosomes. The protein is Peptidyl-tRNA hydrolase of Rickettsia bellii (strain OSU 85-389).